Reading from the N-terminus, the 327-residue chain is WRKY transcription factor WRKY76 (327 aa).

A coiled-coil region spans residues 56–76; it reads AKILEAKVTQMSEENRRLTEV. A disordered region spans residues 88 to 134; it reads LGLDGSASPPRPVSPLSGKKRSRESMETANSCDANSNRHQGGDADHA. Residues 106–112 carry the Nuclear localization signal motif; it reads KKRSRES. A compositionally biased stretch (polar residues) spans 114–126; it reads ETANSCDANSNRH. The WRKY DNA-binding region spans 160–226; sequence DTSLVVKDGY…YEGEHNHPHP (67 aa).

Belongs to the WRKY group II-a family.

It is found in the nucleus. Transcription repressor. Interacts specifically with the W box (5'-(T)TGAC[CT]-3'), a frequently occurring elicitor-responsive cis-acting element. Regulates, probably indirectly, the activation of defense-related genes during defense response. Modulates plant innate immunity against X.oryzae pv. oryzae (Xoo). The protein is WRKY transcription factor WRKY76 of Oryza sativa subsp. indica (Rice).